The chain runs to 574 residues: Proline--tRNA ligase (574 aa).

Belongs to the class-II aminoacyl-tRNA synthetase family. ProS type 1 subfamily. Homodimer.

The protein resides in the cytoplasm. The catalysed reaction is tRNA(Pro) + L-proline + ATP = L-prolyl-tRNA(Pro) + AMP + diphosphate. In terms of biological role, catalyzes the attachment of proline to tRNA(Pro) in a two-step reaction: proline is first activated by ATP to form Pro-AMP and then transferred to the acceptor end of tRNA(Pro). As ProRS can inadvertently accommodate and process non-cognate amino acids such as alanine and cysteine, to avoid such errors it has two additional distinct editing activities against alanine. One activity is designated as 'pretransfer' editing and involves the tRNA(Pro)-independent hydrolysis of activated Ala-AMP. The other activity is designated 'posttransfer' editing and involves deacylation of mischarged Ala-tRNA(Pro). The misacylated Cys-tRNA(Pro) is not edited by ProRS. This is Proline--tRNA ligase from Pseudoalteromonas translucida (strain TAC 125).